We begin with the raw amino-acid sequence, 374 residues long: Eukaryotic translation initiation factor 3 subunit M (374 aa).

One can recognise a PCI domain in the interval 180–339; that stretch reads TAAKVMVELL…RKVVVSHSTH (160 aa).

It belongs to the eIF-3 subunit M family. In terms of assembly, component of the eukaryotic translation initiation factor 3 (eIF-3) complex, which is composed of 13 subunits: EIF3A, EIF3B, EIF3C, EIF3D, EIF3E, EIF3F, EIF3G, EIF3H, EIF3I, EIF3J, EIF3K, EIF3L and EIF3M.

The protein resides in the cytoplasm. Its function is as follows. Component of the eukaryotic translation initiation factor 3 (eIF-3) complex, which is involved in protein synthesis of a specialized repertoire of mRNAs and, together with other initiation factors, stimulates binding of mRNA and methionyl-tRNAi to the 40S ribosome. The eIF-3 complex specifically targets and initiates translation of a subset of mRNAs involved in cell proliferation. This chain is Eukaryotic translation initiation factor 3 subunit M, found in Gallus gallus (Chicken).